The sequence spans 613 residues: Dihydroxy-acid dehydratase (613 aa).

Asp81 provides a ligand contact to Mg(2+). Cys122 lines the [2Fe-2S] cluster pocket. Asp123 and Lys124 together coordinate Mg(2+). N6-carboxylysine is present on Lys124. Cys195 serves as a coordination point for [2Fe-2S] cluster. Residue Glu491 coordinates Mg(2+). Ser517 functions as the Proton acceptor in the catalytic mechanism.

The protein belongs to the IlvD/Edd family. As to quaternary structure, homodimer. The cofactor is [2Fe-2S] cluster. It depends on Mg(2+) as a cofactor.

It carries out the reaction (2R)-2,3-dihydroxy-3-methylbutanoate = 3-methyl-2-oxobutanoate + H2O. The catalysed reaction is (2R,3R)-2,3-dihydroxy-3-methylpentanoate = (S)-3-methyl-2-oxopentanoate + H2O. Its pathway is amino-acid biosynthesis; L-isoleucine biosynthesis; L-isoleucine from 2-oxobutanoate: step 3/4. The protein operates within amino-acid biosynthesis; L-valine biosynthesis; L-valine from pyruvate: step 3/4. In terms of biological role, functions in the biosynthesis of branched-chain amino acids. Catalyzes the dehydration of (2R,3R)-2,3-dihydroxy-3-methylpentanoate (2,3-dihydroxy-3-methylvalerate) into 2-oxo-3-methylpentanoate (2-oxo-3-methylvalerate) and of (2R)-2,3-dihydroxy-3-methylbutanoate (2,3-dihydroxyisovalerate) into 2-oxo-3-methylbutanoate (2-oxoisovalerate), the penultimate precursor to L-isoleucine and L-valine, respectively. This is Dihydroxy-acid dehydratase from Hyphomonas neptunium (strain ATCC 15444).